The chain runs to 173 residues: Ribonuclease H (173 aa).

A disordered region spans residues 1–20 (MKATSKAKTHPPGATAAKDP). The RNase H type-1 domain occupies 20–162 (PQKQVIIYTD…CDVLSKEAAG (143 aa)). 4 residues coordinate Mg(2+): Asp-29, Glu-67, Asp-89, and Asp-154.

Belongs to the RNase H family. As to quaternary structure, monomer. It depends on Mg(2+) as a cofactor.

Its subcellular location is the cytoplasm. The enzyme catalyses Endonucleolytic cleavage to 5'-phosphomonoester.. Endonuclease that specifically degrades the RNA of RNA-DNA hybrids. The polypeptide is Ribonuclease H (Syntrophus aciditrophicus (strain SB)).